Consider the following 638-residue polypeptide: DNA gyrase subunit B (638 aa).

The region spanning 423 to 537 (CEVYIVEGDS…KGHVYLAMPP (115 aa)) is the Toprim domain. 3 residues coordinate Mg(2+): E429, D502, and D504.

It belongs to the type II topoisomerase GyrB family. In terms of assembly, heterotetramer, composed of two GyrA and two GyrB chains. In the heterotetramer, GyrA contains the active site tyrosine that forms a transient covalent intermediate with DNA, while GyrB binds cofactors and catalyzes ATP hydrolysis. Requires Mg(2+) as cofactor. It depends on Mn(2+) as a cofactor. Ca(2+) is required as a cofactor.

It localises to the cytoplasm. The enzyme catalyses ATP-dependent breakage, passage and rejoining of double-stranded DNA.. Its function is as follows. A type II topoisomerase that negatively supercoils closed circular double-stranded (ds) DNA in an ATP-dependent manner to modulate DNA topology and maintain chromosomes in an underwound state. Negative supercoiling favors strand separation, and DNA replication, transcription, recombination and repair, all of which involve strand separation. Also able to catalyze the interconversion of other topological isomers of dsDNA rings, including catenanes and knotted rings. Type II topoisomerases break and join 2 DNA strands simultaneously in an ATP-dependent manner. This Treponema denticola (strain ATCC 35405 / DSM 14222 / CIP 103919 / JCM 8153 / KCTC 15104) protein is DNA gyrase subunit B.